The sequence spans 134 residues: Large ribosomal subunit protein mL41 (134 aa).

Residues 1-13 (MGFLTAVTQGLVR) constitute a mitochondrion transit peptide.

It belongs to the mitochondrion-specific ribosomal protein mL41 family. As to quaternary structure, component of the mitochondrial ribosome large subunit (39S) which comprises a 16S rRNA and about 50 distinct proteins. Interacts with BCL2. Was also identified in the 28S mitochondrial ribosome.

It localises to the mitochondrion. Functionally, component of the mitochondrial ribosome large subunit. Also involved in apoptosis and cell cycle. Enhances p53/TP53 stability, thereby contributing to p53/TP53-induced apoptosis in response to growth-inhibitory condition. Enhances p53/TP53 translocation to the mitochondria. Has the ability to arrest the cell cycle at the G1 phase, possibly by stabilizing the CDKN1A and CDKN1B (p27Kip1) proteins. This chain is Large ribosomal subunit protein mL41 (Mrpl41), found in Rattus norvegicus (Rat).